The primary structure comprises 562 residues: Dihydroxy-acid dehydratase 1 (562 aa).

Aspartate 80 serves as a coordination point for Mg(2+). Residue cysteine 121 participates in [2Fe-2S] cluster binding. Mg(2+) is bound by residues aspartate 122 and lysine 123. An N6-carboxylysine modification is found at lysine 123. Residue cysteine 194 coordinates [2Fe-2S] cluster. Glutamate 446 lines the Mg(2+) pocket. Serine 472 acts as the Proton acceptor in catalysis.

Belongs to the IlvD/Edd family. In terms of assembly, homodimer. [2Fe-2S] cluster is required as a cofactor. Mg(2+) serves as cofactor.

It carries out the reaction (2R)-2,3-dihydroxy-3-methylbutanoate = 3-methyl-2-oxobutanoate + H2O. The enzyme catalyses (2R,3R)-2,3-dihydroxy-3-methylpentanoate = (S)-3-methyl-2-oxopentanoate + H2O. It participates in amino-acid biosynthesis; L-isoleucine biosynthesis; L-isoleucine from 2-oxobutanoate: step 3/4. The protein operates within amino-acid biosynthesis; L-valine biosynthesis; L-valine from pyruvate: step 3/4. Functions in the biosynthesis of branched-chain amino acids. Catalyzes the dehydration of (2R,3R)-2,3-dihydroxy-3-methylpentanoate (2,3-dihydroxy-3-methylvalerate) into 2-oxo-3-methylpentanoate (2-oxo-3-methylvalerate) and of (2R)-2,3-dihydroxy-3-methylbutanoate (2,3-dihydroxyisovalerate) into 2-oxo-3-methylbutanoate (2-oxoisovalerate), the penultimate precursor to L-isoleucine and L-valine, respectively. The chain is Dihydroxy-acid dehydratase 1 from Staphylococcus saprophyticus subsp. saprophyticus (strain ATCC 15305 / DSM 20229 / NCIMB 8711 / NCTC 7292 / S-41).